The chain runs to 156 residues: ATP synthase subunit b (156 aa).

Residues 7–27 (FFAQMVVFFILWWVVAKFIWP) traverse the membrane as a helical segment.

This sequence belongs to the ATPase B chain family. As to quaternary structure, F-type ATPases have 2 components, F(1) - the catalytic core - and F(0) - the membrane proton channel. F(1) has five subunits: alpha(3), beta(3), gamma(1), delta(1), epsilon(1). F(0) has three main subunits: a(1), b(2) and c(10-14). The alpha and beta chains form an alternating ring which encloses part of the gamma chain. F(1) is attached to F(0) by a central stalk formed by the gamma and epsilon chains, while a peripheral stalk is formed by the delta and b chains.

The protein localises to the cell inner membrane. F(1)F(0) ATP synthase produces ATP from ADP in the presence of a proton or sodium gradient. F-type ATPases consist of two structural domains, F(1) containing the extramembraneous catalytic core and F(0) containing the membrane proton channel, linked together by a central stalk and a peripheral stalk. During catalysis, ATP synthesis in the catalytic domain of F(1) is coupled via a rotary mechanism of the central stalk subunits to proton translocation. Its function is as follows. Component of the F(0) channel, it forms part of the peripheral stalk, linking F(1) to F(0). The chain is ATP synthase subunit b from Cupriavidus metallidurans (strain ATCC 43123 / DSM 2839 / NBRC 102507 / CH34) (Ralstonia metallidurans).